Consider the following 270-residue polypeptide: Sorting nexin-11 (270 aa).

The 117-residue stretch at valine 16–valine 132 folds into the PX domain. A 1,2-diacyl-sn-glycero-3-phospho-(1D-myo-inositol-3-phosphate)-binding residues include arginine 59, lysine 85, and arginine 99. Residues isoleucine 135 to valine 139 form an important for membrane trafficking region. Residues serine 168–glutamine 177 show a composition bias toward basic and acidic residues. Residues serine 168–histidine 203 form a disordered region.

Belongs to the sorting nexin family. In terms of assembly, monomer. Interacts with TRPV3; this interaction promotes TRPV3 trafficking from the cell membrane to lysosome for degradation.

The protein resides in the cell membrane. It localises to the endosome. It is found in the cytoplasm. Phosphoinositide-binding protein involved in protein sorting and membrane trafficking in endosomes. Regulates the levels of TRPV3 by promoting its trafficking from the cell membrane to lysosome for degradation. In Homo sapiens (Human), this protein is Sorting nexin-11 (SNX11).